Here is a 152-residue protein sequence, read N- to C-terminus: Small ribosomal subunit protein uS13 (152 aa).

The protein belongs to the universal ribosomal protein uS13 family.

It is found in the cytoplasm. Functionally, located at the top of the head of the 40S subunit, it contacts several helices of the 18S rRNA. This Argopecten irradians (Bay scallop) protein is Small ribosomal subunit protein uS13 (RPS18).